We begin with the raw amino-acid sequence, 468 residues long: UDP-N-acetylmuramate--L-alanine ligase (468 aa).

112 to 118 is a binding site for ATP; it reads GMHGKTT.

This sequence belongs to the MurCDEF family.

It is found in the cytoplasm. The enzyme catalyses UDP-N-acetyl-alpha-D-muramate + L-alanine + ATP = UDP-N-acetyl-alpha-D-muramoyl-L-alanine + ADP + phosphate + H(+). It participates in cell wall biogenesis; peptidoglycan biosynthesis. Functionally, cell wall formation. The chain is UDP-N-acetylmuramate--L-alanine ligase from Koribacter versatilis (strain Ellin345).